Here is a 308-residue protein sequence, read N- to C-terminus: Taste receptor type 2 member 46 (308 aa).

Position 1 (M1) is a topological domain, extracellular. The chain crosses the membrane as a helical span at residues 2 to 22 (ITFLSITFSILVGVIFVIGNF). At 23-46 (ANGFIALVNSIEWVKRQKISFADQ) the chain is on the cytoplasmic side. A helical membrane pass occupies residues 47 to 67 (ILTGLAVSRVGLLWVLLLHLY). Residues 68-86 (ATEFNLAFYSVEVRITAYN) are Extracellular-facing. Residues 87–107 (VWIVTNHFSNWLSTSLSMFYL) form a helical membrane-spanning segment. The Cytoplasmic segment spans residues 108–126 (LKIATFSNLIFLHLKRKVK). The chain crosses the membrane as a helical span at residues 127-147 (SVILVTLLGPLLFLVCHLFVM). At 148–178 (NMNHIVWRKEYEGNITWRIKLRSAMYLSNVT) the chain is on the extracellular side. N-linked (GlcNAc...) asparagine glycosylation is found at N161 and N176. Residues 179–199 (VTMLANLIPLTLTLMSFLLLI) form a helical membrane-spanning segment. Over 200 to 229 (CSLCKHLKKMQVHGKGSQDPSTKVHIKALQ) the chain is Cytoplasmic. The chain crosses the membrane as a helical span at residues 230–250 (TVTSFLLLCAIYFLSMILSVW). Over 251–258 (NFELEKKP) the chain is Extracellular. The chain crosses the membrane as a helical span at residues 259-279 (VFMFCQAVIFSYPSTHPLILI). Residues 280-308 (WGNKKLKQIFLSVLWNVRYWVKGQKPSSP) are Cytoplasmic-facing.

It belongs to the G-protein coupled receptor T2R family.

It localises to the membrane. The protein resides in the cell projection. It is found in the cilium membrane. Receptor that may play a role in the perception of bitterness and is gustducin-linked. May play a role in sensing the chemical composition of the gastrointestinal content. The activity of this receptor may stimulate alpha gustducin, mediate PLC-beta-2 activation and lead to the gating of TRPM5. In airway epithelial cells, binding of bitter compounds increases the intracellular calcium ion concentration and stimulates ciliary beat frequency. The sequence is that of Taste receptor type 2 member 46 (TAS2R46) from Macaca mulatta (Rhesus macaque).